We begin with the raw amino-acid sequence, 603 residues long: GRLLLGSLLVSLESALSAPPPWKAPKERRHRAEEFTVGLTVTGEPCYFPFQYNRQLYHHCIHKGRPGPRPWCATTPNFDQDQQWAYCLEPKKVKDHCSKHNPCQRGGICVNTLSSPHCLCPDHLTGKHCQREKCFEPQLHRFFHENEIWFRTGPAGVAKCHCKGPDAHCKQMHSQECQTNPCLNGGRCLEVEGHHLCDCPMGYTGPFCDLDTTASCYEGRGVSYRGMARTTVSGAKCQRWASEATYRNMTAEQALRRGLGHHTFCRNPDNDTRPWCFVWMGNRLSWEYCDLAQCQYPPQPTATPHDRFEHPKLPSSRLSILQTPQPTTQNQALANELPETSSLLCGQRLRKRLSSLSRIVGGLVALPGAHPYIAALYWGSNFCSGSLIAPCWVLTAAHCLQNRPAPEELKVVLGQDRHNQSCEHCQTLAVHSYRLHEAFSPSSYLNDLALLRLQKSADGSCAQLSPYVQTVCLPSGPAPPSESETTCCEVAGWGHQFEGAEEYSSFLQEAQVPLISSERCSSPEVHGDAFLSGMLCAGFLEGGTDACQGDSGGPLVCEDEAAEHRLILRGIVSWGSGCGDRNKPGVYTDVASYLTWIQKHTAS.

An N-terminal signal peptide occupies residues 1–18 (GRLLLGSLLVSLESALSA). The Fibronectin type-II domain occupies 41–89 (VTGEPCYFPFQYNRQLYHHCIHKGRPGPRPWCATTPNFDQDQQWAYCLE). Disulfide bonds link Cys-46-Cys-72, Cys-60-Cys-87, Cys-97-Cys-109, Cys-103-Cys-118, Cys-120-Cys-129, Cys-134-Cys-162, Cys-160-Cys-169, Cys-177-Cys-188, Cys-182-Cys-197, Cys-199-Cys-208, Cys-216-Cys-294, Cys-237-Cys-276, Cys-265-Cys-289, Cys-345-Cys-472, Cys-383-Cys-399, Cys-391-Cys-461, Cys-422-Cys-425, Cys-488-Cys-557, Cys-520-Cys-536, and Cys-547-Cys-578. An EGF-like 1 domain is found at 93–130 (VKDHCSKHNPCQRGGICVNTLSSPHCLCPDHLTGKHCQ). The 41-residue stretch at 132 to 172 (EKCFEPQLHRFFHENEIWFRTGPAGVAKCHCKGPDAHCKQM) folds into the Fibronectin type-I domain. The 37-residue stretch at 173–209 (HSQECQTNPCLNGGRCLEVEGHHLCDCPMGYTGPFCD) folds into the EGF-like 2 domain. A Kringle domain is found at 216 to 294 (CYEGRGVSYR…SWEYCDLAQC (79 aa)). 2 N-linked (GlcNAc...) asparagine glycosylation sites follow: Asn-248 and Asn-270. Residues 359–602 (IVGGLVALPG…YLTWIQKHTA (244 aa)) form the Peptidase S1 domain. His-398 serves as the catalytic Charge relay system. N-linked (GlcNAc...) asparagine glycosylation is present at Asn-419. Catalysis depends on Asp-447, which acts as the Charge relay system. Catalysis depends on Ser-551, which acts as the Charge relay system.

This sequence belongs to the peptidase S1 family. As to quaternary structure, interacts with HRG; the interaction, which is enhanced in the presence of zinc ions and inhibited by heparin-binding, inhibits factor XII autoactivation and contact-initiated coagulation. Post-translationally, O- and N-glycosylated.

The protein localises to the secreted. The enzyme catalyses Selective cleavage of Arg-|-Ile bonds in factor VII to form factor VIIa and factor XI to form factor XIa.. Its activity is regulated as follows. Activity is promoted in the presence of negatively charged surfaces. Functionally, factor XII is a serum glycoprotein that participates in the initiation of blood coagulation, fibrinolysis, and the generation of bradykinin and angiotensin. Prekallikrein is cleaved by factor XII to form kallikrein, which then cleaves factor XII first to alpha-factor XIIa and then trypsin cleaves it to beta-factor XIIa. Alpha-factor XIIa activates factor XI to factor XIa. This chain is Coagulation factor XII (F12), found in Cavia porcellus (Guinea pig).